Reading from the N-terminus, the 116-residue chain is uncharacterized protein (116 aa).

The next 2 helical transmembrane spans lie at 40–60 and 72–92; these read AIVKVDFFSFDGAGFCIIGIL and FLGSICRSIFSIVAQMQVVPI.

The protein localises to the membrane. This is an uncharacterized protein from Saccharomyces cerevisiae (strain ATCC 204508 / S288c) (Baker's yeast).